The primary structure comprises 274 residues: Penicillin-insensitive murein endopeptidase (274 aa).

A signal peptide spans M1–A19. Disulfide bonds link C44–C265, C187–C235, and C216–C223. Zn(2+)-binding residues include H110, H113, D120, D147, H150, and H211. The disordered stretch occupies residues P227 to I274.

Belongs to the peptidase M74 family. Dimer. Requires Zn(2+) as cofactor.

The protein resides in the periplasm. Its function is as follows. Murein endopeptidase that cleaves the D-alanyl-meso-2,6-diamino-pimelyl amide bond that connects peptidoglycan strands. Likely plays a role in the removal of murein from the sacculus. In Escherichia coli (strain SE11), this protein is Penicillin-insensitive murein endopeptidase.